Consider the following 428-residue polypeptide: Glutamate-1-semialdehyde 2,1-aminomutase (428 aa).

K267 carries the N6-(pyridoxal phosphate)lysine modification.

Belongs to the class-III pyridoxal-phosphate-dependent aminotransferase family. HemL subfamily. Homodimer. The cofactor is pyridoxal 5'-phosphate.

The protein resides in the cytoplasm. The catalysed reaction is (S)-4-amino-5-oxopentanoate = 5-aminolevulinate. Its pathway is porphyrin-containing compound metabolism; protoporphyrin-IX biosynthesis; 5-aminolevulinate from L-glutamyl-tRNA(Glu): step 2/2. This is Glutamate-1-semialdehyde 2,1-aminomutase from Desulforapulum autotrophicum (strain ATCC 43914 / DSM 3382 / VKM B-1955 / HRM2) (Desulfobacterium autotrophicum).